The sequence spans 561 residues: Mercuric reductase (561 aa).

An HMA domain is found at 1–65; sequence MTTLKITGMT…AVAGLGYEAT (65 aa). A metal cation is bound by residues Cys-11 and Cys-14. Residues Ala-110, Gly-130, and Thr-135 each coordinate FAD. A disulfide bridge connects residues Cys-136 and Cys-141. FAD-binding residues include Lys-145, Ala-211, Asp-403, and Val-411. The Hg(2+) site is built by Cys-558 and Cys-559.

It belongs to the class-I pyridine nucleotide-disulfide oxidoreductase family. In terms of assembly, homodimer. Requires FAD as cofactor.

It catalyses the reaction Hg + NADP(+) + H(+) = Hg(2+) + NADPH. In terms of biological role, resistance to Hg(2+) in bacteria appears to be governed by a specialized system which includes mercuric reductase. MerA protein is responsible for volatilizing mercury as Hg(0). The protein is Mercuric reductase (merA) of Enterobacter agglomerans (Erwinia herbicola).